The sequence spans 161 residues: Globin CTT-VIIB-10 (161 aa).

An N-terminal signal peptide occupies residues 1-16 (MKFFAVLALCIVGAIA). Residues 18 to 161 (PLTADEASLV…NTFAIVVPRL (144 aa)) form the Globin domain. Positions 76 and 111 each coordinate heme b.

This sequence belongs to the globin family. In terms of assembly, homodimer.

In Chironomus thummi thummi (Midge), this protein is Globin CTT-VIIB-10 (CTT-7B10).